A 321-amino-acid chain; its full sequence is GTP 3',8-cyclase (321 aa).

The Radical SAM core domain occupies 5–233; that stretch reads SFNRVIDYIR…QGSSKIYTLE (229 aa). A GTP-binding site is contributed by R14. The [4Fe-4S] cluster site is built by C21 and C25. S-adenosyl-L-methionine is bound at residue Y27. Residue C28 participates in [4Fe-4S] cluster binding. R64 contacts GTP. G68 serves as a coordination point for S-adenosyl-L-methionine. GTP is bound at residue S95. S119 is an S-adenosyl-L-methionine binding site. A GTP-binding site is contributed by K155. M189 is an S-adenosyl-L-methionine binding site. C249 and C252 together coordinate [4Fe-4S] cluster. 254-256 contacts GTP; sequence RIR. C266 is a [4Fe-4S] cluster binding site.

Belongs to the radical SAM superfamily. MoaA family. In terms of assembly, monomer and homodimer. The cofactor is [4Fe-4S] cluster.

It catalyses the reaction GTP + AH2 + S-adenosyl-L-methionine = (8S)-3',8-cyclo-7,8-dihydroguanosine 5'-triphosphate + 5'-deoxyadenosine + L-methionine + A + H(+). The protein operates within cofactor biosynthesis; molybdopterin biosynthesis. In terms of biological role, catalyzes the cyclization of GTP to (8S)-3',8-cyclo-7,8-dihydroguanosine 5'-triphosphate. In Helicobacter pylori (strain ATCC 700392 / 26695) (Campylobacter pylori), this protein is GTP 3',8-cyclase.